Consider the following 317-residue polypeptide: L-lactate dehydrogenase (317 aa).

Residues Val16, Asp37, Lys42, Tyr68, and 82–83 (GA) each bind NAD(+). Substrate-binding residues include Gln85 and Arg91. NAD(+) is bound by residues Thr104, 121–123 (ATN), and Ser146. Residue 123-126 (NPVD) participates in substrate binding. A substrate-binding site is contributed by 151-154 (DTAR). Beta-D-fructose 1,6-bisphosphate contacts are provided by Arg156 and His171. Catalysis depends on His178, which acts as the Proton acceptor. Tyr222 is subject to Phosphotyrosine. Residue Thr231 participates in substrate binding.

Belongs to the LDH/MDH superfamily. LDH family. In terms of assembly, homotetramer.

Its subcellular location is the cytoplasm. The enzyme catalyses (S)-lactate + NAD(+) = pyruvate + NADH + H(+). It participates in fermentation; pyruvate fermentation to lactate; (S)-lactate from pyruvate: step 1/1. Its activity is regulated as follows. Allosterically activated by fructose 1,6-bisphosphate (FBP). Functionally, catalyzes the conversion of lactate to pyruvate. In Corynebacterium efficiens (strain DSM 44549 / YS-314 / AJ 12310 / JCM 11189 / NBRC 100395), this protein is L-lactate dehydrogenase.